We begin with the raw amino-acid sequence, 132 residues long: NAD(P) transhydrogenase subunit alpha part 2 (132 aa).

The next 3 helical transmembrane spans lie at 43-63 (PLVF…YVVW), 72-92 (PLMS…MIAI), and 103-123 (LLGS…FIVT).

In terms of assembly, complex of an alpha and a beta chain; in Rickettsia, the alpha chain seems to be made of two subunits.

Its subcellular location is the cell inner membrane. It catalyses the reaction NAD(+) + NADPH + H(+)(in) = NADH + NADP(+) + H(+)(out). In terms of biological role, the transhydrogenation between NADH and NADP is coupled to respiration and ATP hydrolysis and functions as a proton pump across the membrane. This Rickettsia prowazekii (strain Madrid E) protein is NAD(P) transhydrogenase subunit alpha part 2 (pntAB).